A 143-amino-acid polypeptide reads, in one-letter code: Large ribosomal subunit protein uL11 (143 aa).

This sequence belongs to the universal ribosomal protein uL11 family. Part of the ribosomal stalk of the 50S ribosomal subunit. Interacts with L10 and the large rRNA to form the base of the stalk. L10 forms an elongated spine to which L12 dimers bind in a sequential fashion forming a multimeric L10(L12)X complex. One or more lysine residues are methylated.

Forms part of the ribosomal stalk which helps the ribosome interact with GTP-bound translation factors. In Paraburkholderia phytofirmans (strain DSM 17436 / LMG 22146 / PsJN) (Burkholderia phytofirmans), this protein is Large ribosomal subunit protein uL11.